A 322-amino-acid chain; its full sequence is MKVLSLLAAASAASAHTIFVQLEADGTTYPVSYGIRTPSYDGPITDVTSNDLACNGGPNPTTPSDKIITVNAGSTVKAIWRHTLTSGADDVMDASHKGPTLAYLKKVDDALTDTGIGGGWFKIQEDGYNNGQWGTSTVITNGGFQYIDIPACIPSGQYLLRAEMIALHAASSTAGAQLYMECAQINIVGGTGGTALPSTTYSIPGIYKATDPGLLVNIYSMSPSSTYTIPGPAKFTCPAGNGGGAGGGGSTTTAKPASSTTSKAAITSAVTTLKTSVVAPQPTGGCTAAQWAQCGGMGFSGCTTCASPYTCKKMNDYYSQCS.

The N-terminal stretch at 1 to 15 (MKVLSLLAAASAASA) is a signal peptide. Residues histidine 16 and histidine 96 each coordinate Cu(2+). 2 disulfides stabilise this stretch: cysteine 54–cysteine 182 and cysteine 152–cysteine 237. Residues histidine 168 and glutamine 177 each coordinate O2. Threonine 228 and threonine 236 each carry an O-linked (Man...) threonine glycan. One can recognise a CBM1 domain in the interval 286–322 (CTAAQWAQCGGMGFSGCTTCASPYTCKKMNDYYSQCS).

It belongs to the polysaccharide monooxygenase AA9 family. The cofactor is Cu(2+).

It is found in the secreted. It carries out the reaction [(1-&gt;4)-beta-D-glucosyl]n+m + reduced acceptor + O2 = 4-dehydro-beta-D-glucosyl-[(1-&gt;4)-beta-D-glucosyl]n-1 + [(1-&gt;4)-beta-D-glucosyl]m + acceptor + H2O.. Its function is as follows. Lytic polysaccharide monooxygenase (LPMO) that depolymerizes crystalline and amorphous polysaccharides via the oxidation of scissile alpha- or beta-(1-4)-glycosidic bonds, yielding C4 oxidation products. Catalysis by LPMOs requires the reduction of the active-site copper from Cu(II) to Cu(I) by a reducing agent and H(2)O(2) or O(2) as a cosubstrate. Active on tamarind xyloglucan and konjac glucomannan. This Neurospora crassa (strain ATCC 24698 / 74-OR23-1A / CBS 708.71 / DSM 1257 / FGSC 987) protein is AA9 family lytic polysaccharide monooxygenase A (gh61-1).